The chain runs to 134 residues: NAD(P)H-quinone oxidoreductase subunit 3 (134 aa).

The next 3 membrane-spanning stretches (helical) occupy residues 20 to 40, 78 to 98, and 103 to 123; these read GYDAFLGFLLVSAAVPILALV, MFALVFVIFDVETVFLYPWAV, and LGLLAFIEALIFIAILLVALA.

The protein belongs to the complex I subunit 3 family. As to quaternary structure, NDH-1 can be composed of about 15 different subunits; different subcomplexes with different compositions have been identified which probably have different functions.

The protein resides in the cellular thylakoid membrane. The enzyme catalyses a plastoquinone + NADH + (n+1) H(+)(in) = a plastoquinol + NAD(+) + n H(+)(out). It carries out the reaction a plastoquinone + NADPH + (n+1) H(+)(in) = a plastoquinol + NADP(+) + n H(+)(out). Its function is as follows. NDH-1 shuttles electrons from an unknown electron donor, via FMN and iron-sulfur (Fe-S) centers, to quinones in the respiratory and/or the photosynthetic chain. The immediate electron acceptor for the enzyme in this species is believed to be plastoquinone. Couples the redox reaction to proton translocation, and thus conserves the redox energy in a proton gradient. Cyanobacterial NDH-1 also plays a role in inorganic carbon-concentration. In Prochlorococcus marinus (strain MIT 9303), this protein is NAD(P)H-quinone oxidoreductase subunit 3.